The chain runs to 860 residues: Leucine--tRNA ligase (860 aa).

Positions 42-52 (PYPSGRLHMGH) match the 'HIGH' region motif. The 'KMSKS' region signature appears at 619-623 (KMSKS). K622 contributes to the ATP binding site.

This sequence belongs to the class-I aminoacyl-tRNA synthetase family.

Its subcellular location is the cytoplasm. The catalysed reaction is tRNA(Leu) + L-leucine + ATP = L-leucyl-tRNA(Leu) + AMP + diphosphate. This Proteus mirabilis (strain HI4320) protein is Leucine--tRNA ligase.